Reading from the N-terminus, the 179-residue chain is Cell division protein ZapC (179 aa).

This sequence belongs to the ZapC family. As to quaternary structure, interacts directly with FtsZ.

Its subcellular location is the cytoplasm. In terms of biological role, contributes to the efficiency of the cell division process by stabilizing the polymeric form of the cell division protein FtsZ. Acts by promoting interactions between FtsZ protofilaments and suppressing the GTPase activity of FtsZ. The polypeptide is Cell division protein ZapC (Tolumonas auensis (strain DSM 9187 / NBRC 110442 / TA 4)).